Here is a 314-residue protein sequence, read N- to C-terminus: Probable cell division protein WhiA (314 aa).

A DNA-binding region (H-T-H motif) is located at residues 274-308; the sequence is SLKELGEMVSTGTISKSGVNHRLRKLNELADKIRS.

Belongs to the WhiA family.

In terms of biological role, involved in cell division and chromosome segregation. This is Probable cell division protein WhiA from Staphylococcus carnosus (strain TM300).